A 968-amino-acid chain; its full sequence is Phosphoenolpyruvate carboxylase (968 aa).

The residue at position 11 (serine 11) is a Phosphoserine. Residues histidine 172 and lysine 602 contribute to the active site.

Belongs to the PEPCase type 1 family. As to quaternary structure, homotetramer. It depends on Mg(2+) as a cofactor.

Its subcellular location is the cytoplasm. The catalysed reaction is oxaloacetate + phosphate = phosphoenolpyruvate + hydrogencarbonate. With respect to regulation, by light-reversible phosphorylation. Functionally, through the carboxylation of phosphoenolpyruvate (PEP) it forms oxaloacetate, a four-carbon dicarboxylic acid source for the tricarboxylic acid cycle. The chain is Phosphoenolpyruvate carboxylase from Phaseolus vulgaris (Kidney bean).